The primary structure comprises 377 residues: Glutamate 5-kinase (377 aa).

Lys22 contributes to the ATP binding site. Substrate-binding residues include Ser62, Asp149, and Asn161. ATP is bound by residues 181 to 182 (TD) and 223 to 229 (TGGMVTK). The PUA domain maps to 285-363 (RGTIVVDAGA…AQLKRFLGPQ (79 aa)).

It belongs to the glutamate 5-kinase family.

It is found in the cytoplasm. It catalyses the reaction L-glutamate + ATP = L-glutamyl 5-phosphate + ADP. The protein operates within amino-acid biosynthesis; L-proline biosynthesis; L-glutamate 5-semialdehyde from L-glutamate: step 1/2. Functionally, catalyzes the transfer of a phosphate group to glutamate to form L-glutamate 5-phosphate. The sequence is that of Glutamate 5-kinase from Bifidobacterium longum (strain DJO10A).